A 100-amino-acid chain; its full sequence is Large ribosomal subunit protein uL23 (100 aa).

The protein belongs to the universal ribosomal protein uL23 family. In terms of assembly, part of the 50S ribosomal subunit. Contacts protein L29, and trigger factor when it is bound to the ribosome.

One of the early assembly proteins it binds 23S rRNA. One of the proteins that surrounds the polypeptide exit tunnel on the outside of the ribosome. Forms the main docking site for trigger factor binding to the ribosome. This is Large ribosomal subunit protein uL23 from Synechococcus sp. (strain CC9902).